Consider the following 501-residue polypeptide: Pyruvate kinase (501 aa).

Arginine 50 is a substrate binding site. Positions 52, 54, 85, and 86 each coordinate K(+). 52 to 55 contributes to the ATP binding site; that stretch reads NFSH. 2 residues coordinate ATP: arginine 92 and lysine 178. Glutamate 243 is a binding site for Mg(2+). Residues glycine 266, aspartate 267, and threonine 299 each coordinate substrate. Residue aspartate 267 coordinates Mg(2+).

It belongs to the pyruvate kinase family. In terms of assembly, homotetramer. Mg(2+) is required as a cofactor. It depends on K(+) as a cofactor.

The enzyme catalyses pyruvate + ATP = phosphoenolpyruvate + ADP + H(+). The protein operates within carbohydrate degradation; glycolysis; pyruvate from D-glyceraldehyde 3-phosphate: step 5/5. This chain is Pyruvate kinase (PYK1), found in Lachancea kluyveri (strain ATCC 58438 / CBS 3082 / BCRC 21498 / NBRC 1685 / JCM 7257 / NCYC 543 / NRRL Y-12651) (Yeast).